Consider the following 520-residue polypeptide: MSPTMFTIISILLSLICLVVGYFVRKTIAEAKISGARNMAEQIVEDAKRDAEALKKEALLEAKDEIHSFRVEAEQEVRERRNELQRQENRLLQKEENLDRKDESLDKRESLLEKRDHSLNERQQHIEEMESKVDDMIRLQKAELERISSLTRDEAKQIILDQVENELSHDIAVMTKESENRAKEEADKKAKNILSLALQRCAADHVAETTVSVVNLPNDEMKGRIIGREGRNIRTLETLTGIDLIIDDTPEAVILSGFDPIRRETARIALDKLVQDGRIHPARIEEMVEKSRREVDDYIREMGEQTTFEVGVHGLHPDLIKILGRLKFRTSYGQNVLKHSIEVAHLAGLMASELGEDAKLAKRAGLLHDIGKAIDHEVEGSHVEIGVELATKYKEHPVVINSIASHHGDQEPTSIIAVLVAAADALSAARPGARSETLENYIRRLEKLEDISESYEGVEKSFAIQAGREVRIMVKPDSINDLEAHRLARDIRKRIEDELDYPGHIKVTVIRETRAVEYAK.

A helical membrane pass occupies residues 4-24; sequence TMFTIISILLSLICLVVGYFV. Residues 210 to 273 form the KH domain; sequence TVSVVNLPND…ETARIALDKL (64 aa). The region spanning 336–429 is the HD domain; that stretch reads VLKHSIEVAH…VAAADALSAA (94 aa).

Belongs to the RNase Y family.

The protein resides in the cell membrane. In terms of biological role, endoribonuclease that initiates mRNA decay. The chain is Ribonuclease Y from Bacillus pumilus (strain SAFR-032).